A 312-amino-acid chain; its full sequence is uncharacterized protein (312 aa).

This is an uncharacterized protein from Escherichia coli O157:H7.